Here is a 259-residue protein sequence, read N- to C-terminus: Glutamate racemase (259 aa).

Substrate is bound by residues 7–8 (DS) and 39–40 (YG). Cys70 functions as the Proton donor/acceptor in the catalytic mechanism. 71–72 (NS) provides a ligand contact to substrate. Cys180 (proton donor/acceptor) is an active-site residue. Residue 181-182 (TH) coordinates substrate.

This sequence belongs to the aspartate/glutamate racemases family.

The enzyme catalyses L-glutamate = D-glutamate. It participates in cell wall biogenesis; peptidoglycan biosynthesis. In terms of biological role, provides the (R)-glutamate required for cell wall biosynthesis. This Hydrogenobaculum sp. (strain Y04AAS1) protein is Glutamate racemase.